Here is a 360-residue protein sequence, read N- to C-terminus: Zinc finger protein ztf-2 (360 aa).

Residues 19 to 41 form a disordered region; it reads LSSPEKEHRRKRRRGEVANPSNT. 3 consecutive C2H2-type zinc fingers follow at residues 87–109, 115–138, and 180–203; these read RTCSTCGYQGKWVSEMIRHKRVH, FKCRYCSRTSKWKADLIRHVAKTH, and YRCQLCSFEDERVSVLNSHVSHLH. A compositionally biased stretch (low complexity) spans 248 to 260; sequence PLSPCRSESSSDS. Positions 248–272 are disordered; that stretch reads PLSPCRSESSSDSGIQTDPEEEASI.

Expressed in pharyngeal epithelium/arcade, which connects the pharynx to the mouth.

Its function is as follows. Transcription factor. Represses gene expression, probably via binding to DNA consensus sequence 5'-[AT][CT]TTCC[AC][AG]-3' in promoter regions. May play a role in pharynx morphogenesis. This chain is Zinc finger protein ztf-2, found in Caenorhabditis elegans.